A 171-amino-acid chain; its full sequence is uncharacterized protein (171 aa).

An N-terminal signal peptide occupies residues 1–17 (MLKRIIWILFLLGLTWG).

Part of the elfADCG-ycbUVF fimbrial operon, which promotes adhesion of bacteria to different abiotic surfaces. This is an uncharacterized protein from Escherichia coli (strain K12).